The sequence spans 962 residues: Rho GTPase-activating protein syd-1 (962 aa).

Disordered regions lie at residues 231–367, 397–419, and 437–471; these read GKKS…MRSD, PRTL…RIMT, and CGEE…NGSP. Composition is skewed to polar residues over residues 243-261, 323-345, 401-412, and 453-471; these read NATT…SSPR, SFNS…SSTA, RQPNDSNKSNSL, and PPFS…NGSP. The C2 domain maps to 572-696; the sequence is RAAGPGINVD…NDDRVFALNL (125 aa). The 195-residue stretch at 729–923 folds into the Rho-GAP domain; the sequence is VPLGRLVQRE…LDMNQASSSL (195 aa). A compositionally biased stretch (polar residues) spans 934–947; the sequence is VNSESGSDSPATSG. Positions 934-962 are disordered; sequence VNSESGSDSPATSGQKGGGGVSYVSESQC.

It is found in the synapse. Its function is as follows. Probable GTPase activator for the Rho-type GTPases by converting them to an inactive GDP-bound state. Regulates the localization and assembly of presynaptic components during presynaptic development and is required for specifying the identity of axons during initial polarity acquisition. In these roles it is thought to act cell autonomously downstream of syg-1 and syg-2 and upstream of syd-2, possibly as a positive regulator of the latter. Required for the control of movement, egg-laying and the correct localization of elks-1. The sequence is that of Rho GTPase-activating protein syd-1 from Caenorhabditis briggsae.